A 363-amino-acid chain; its full sequence is Heat-inducible transcription repressor HrcA (363 aa).

Belongs to the HrcA family.

Functionally, negative regulator of class I heat shock genes (grpE-dnaK-dnaJ and groELS operons). Prevents heat-shock induction of these operons. This chain is Heat-inducible transcription repressor HrcA, found in Rhizobium radiobacter (Agrobacterium tumefaciens).